Consider the following 280-residue polypeptide: Putative pyruvate, phosphate dikinase regulatory protein (280 aa).

158–165 serves as a coordination point for ADP; that stretch reads GVSRTSKT.

This sequence belongs to the pyruvate, phosphate/water dikinase regulatory protein family. PDRP subfamily.

The catalysed reaction is N(tele)-phospho-L-histidyl/L-threonyl-[pyruvate, phosphate dikinase] + ADP = N(tele)-phospho-L-histidyl/O-phospho-L-threonyl-[pyruvate, phosphate dikinase] + AMP + H(+). The enzyme catalyses N(tele)-phospho-L-histidyl/O-phospho-L-threonyl-[pyruvate, phosphate dikinase] + phosphate + H(+) = N(tele)-phospho-L-histidyl/L-threonyl-[pyruvate, phosphate dikinase] + diphosphate. Functionally, bifunctional serine/threonine kinase and phosphorylase involved in the regulation of the pyruvate, phosphate dikinase (PPDK) by catalyzing its phosphorylation/dephosphorylation. This is Putative pyruvate, phosphate dikinase regulatory protein from Lactobacillus johnsonii (strain CNCM I-12250 / La1 / NCC 533).